Here is a 583-residue protein sequence, read N- to C-terminus: 5-aminolevulinate synthase, erythroid-specific, mitochondrial (583 aa).

Position 158 (Arg158) interacts with succinyl-CoA. The pyridoxal 5'-phosphate site is built by Cys253 and Phe254. Positions 275 and 294 each coordinate succinyl-CoA. Pyridoxal 5'-phosphate is bound by residues Ser327, His355, and Thr383. Residue Lys386 is part of the active site. Residue Lys386 is modified to N6-(pyridoxal phosphate)lysine. Residues Thr415 and Thr416 each contribute to the pyridoxal 5'-phosphate site. Residue Thr503 coordinates succinyl-CoA.

This sequence belongs to the class-II pyridoxal-phosphate-dependent aminotransferase family. In terms of assembly, homodimer. The cofactor is pyridoxal 5'-phosphate.

The protein resides in the mitochondrion inner membrane. It carries out the reaction succinyl-CoA + glycine + H(+) = 5-aminolevulinate + CO2 + CoA. It participates in porphyrin-containing compound metabolism; protoporphyrin-IX biosynthesis; 5-aminolevulinate from glycine: step 1/1. Catalyzes the pyridoxal 5'-phosphate (PLP)-dependent condensation of succinyl-CoA and glycine to form aminolevulinic acid (ALA), with CoA and CO2 as by-products. Contributes significantly to heme formation during erythropoiesis. This is 5-aminolevulinate synthase, erythroid-specific, mitochondrial (alas2) from Danio rerio (Zebrafish).